We begin with the raw amino-acid sequence, 126 residues long: Ribonuclease P protein component (126 aa).

Belongs to the RnpA family. Consists of a catalytic RNA component (M1 or rnpB) and a protein subunit.

It carries out the reaction Endonucleolytic cleavage of RNA, removing 5'-extranucleotides from tRNA precursor.. Its function is as follows. RNaseP catalyzes the removal of the 5'-leader sequence from pre-tRNA to produce the mature 5'-terminus. It can also cleave other RNA substrates such as 4.5S RNA. The protein component plays an auxiliary but essential role in vivo by binding to the 5'-leader sequence and broadening the substrate specificity of the ribozyme. The sequence is that of Ribonuclease P protein component from Brevibacillus brevis (strain 47 / JCM 6285 / NBRC 100599).